The sequence spans 152 residues: Non-specific lipid transfer protein GPI-anchored 8 (152 aa).

The first 23 residues, 1-23 (MNITRILGVVTTVVILYSVQVTA), serve as a signal peptide directing secretion. 3 cysteine pairs are disulfide-bonded: C42–C56, C57–C98, and C70–C107. N108 is a glycosylation site (N-linked (GlcNAc...) asparagine). Residue S124 is the site of GPI-anchor amidated serine attachment. Residues 125-152 (GNSFSTKKNTALAITFFGFSFVFLGMII) constitute a propeptide, removed in mature form.

Belongs to the plant LTP family.

Its subcellular location is the cell membrane. In terms of biological role, probable lipid transfer protein. This Arabidopsis thaliana (Mouse-ear cress) protein is Non-specific lipid transfer protein GPI-anchored 8.